The primary structure comprises 654 residues: Macrolide export ATP-binding/permease protein MacB (654 aa).

The 239-residue stretch at 6-244 (LKVEDLTRRF…EQAAKTPSAS (239 aa)) folds into the ABC transporter domain. An ATP-binding site is contributed by 42–49 (GASGSGKS). Transmembrane regions (helical) follow at residues 280–300 (FLTMLGIIIGIASVVSVVALG), 529–549 (LLISAIAVISLIVGGIGVMNI), 584–604 (LVCLCGGIAGIGLAFLIGFAF), and 619–639 (SIIWAFICSTLIGIAFGFLPA).

Belongs to the ABC transporter superfamily. Macrolide exporter (TC 3.A.1.122) family. As to quaternary structure, homodimer. Part of the tripartite efflux system MacAB-TolC, which is composed of an inner membrane transporter, MacB, a periplasmic membrane fusion protein, MacA, and an outer membrane component, TolC. The complex forms a large protein conduit and can translocate molecules across both the inner and outer membranes. Interacts with MacA.

The protein localises to the cell inner membrane. In terms of biological role, part of the tripartite efflux system MacAB-TolC. MacB is a non-canonical ABC transporter that contains transmembrane domains (TMD), which form a pore in the inner membrane, and an ATP-binding domain (NBD), which is responsible for energy generation. Confers resistance against macrolides. This Vibrio parahaemolyticus serotype O3:K6 (strain RIMD 2210633) protein is Macrolide export ATP-binding/permease protein MacB.